Reading from the N-terminus, the 58-residue chain is Large ribosomal subunit protein uL30 (58 aa).

This sequence belongs to the universal ribosomal protein uL30 family. Part of the 50S ribosomal subunit.

This Novosphingobium aromaticivorans (strain ATCC 700278 / DSM 12444 / CCUG 56034 / CIP 105152 / NBRC 16084 / F199) protein is Large ribosomal subunit protein uL30.